The following is a 760-amino-acid chain: Xaa-Pro dipeptidyl-peptidase (760 aa).

Active-site charge relay system residues include S349, D469, and H499.

The protein belongs to the peptidase S15 family. As to quaternary structure, homodimer.

It is found in the cytoplasm. The enzyme catalyses Hydrolyzes Xaa-Pro-|- bonds to release unblocked, N-terminal dipeptides from substrates including Ala-Pro-|-p-nitroanilide and (sequentially) Tyr-Pro-|-Phe-Pro-|-Gly-Pro-|-Ile.. In terms of biological role, removes N-terminal dipeptides sequentially from polypeptides having unsubstituted N-termini provided that the penultimate residue is proline. This chain is Xaa-Pro dipeptidyl-peptidase, found in Streptococcus pyogenes serotype M6 (strain ATCC BAA-946 / MGAS10394).